The sequence spans 267 residues: MAGNFWQSSHSQQWILDKPDLLRERQHDLLALNEDEYQKVFIFFANVIQVLGEQLKLRQQVIATATVYFKRFYARNSLKNIDPLLLAPTCILLASKVEEFGVISNSRLISICQSAIKTKFSYAYAQEFPYRTNHILECEFYLLENLDCCLIVYQPYRPLLQLVQDMGQEDQLLTLSWRIVNDSLRTDVCLLYPPYQIAIACLQIACVILQKDATKQWFAELNVDLDKVQEIVRAIVNLYELWKDWKEKDEIQMLLSKIPKPKPPPQR.

Positions 48-151 (IQVLGEQLKL…LLENLDCCLI (104 aa)) constitute a Cyclin N-terminal domain.

This sequence belongs to the cyclin family. Cyclin C subfamily. As to quaternary structure, component of the Cdk8 module of the Mediator complex, composed of CycC, Cdk8, kto and skd.

It is found in the nucleus. Component of the Mediator complex, a coactivator involved in regulated gene transcription of nearly all RNA polymerase II-dependent genes. Mediator functions as a bridge to convey information from gene-specific regulatory proteins to the basal RNA polymerase II transcription machinery. Mediator is recruited to promoters by direct interactions with regulatory proteins and serves as a scaffold for the assembly of a functional preinitiation complex with RNA polymerase II and the general transcription factors. Binds to and activates cyclin-dependent kinase Cdk8 that phosphorylates the CTD (C-terminal domain) of the large subunit of RNA polymerase II (RNAp II), which may inhibit the formation of a transcription initiation complex. Required for leg and eye development and macrochaete specification or differentiation. The polypeptide is Cyclin-C (CycC) (Drosophila melanogaster (Fruit fly)).